Here is a 31-residue protein sequence, read N- to C-terminus: Electron transfer flavoprotein-ubiquinone oxidoreductase (31 aa).

11 to 25 provides a ligand contact to FAD; that stretch reads VVIVGAGGAGLSAAI.

As to quaternary structure, monomer. [4Fe-4S] cluster serves as cofactor. The cofactor is FAD.

The catalysed reaction is a ubiquinone + reduced [electron-transfer flavoprotein] = a ubiquinol + oxidized [electron-transfer flavoprotein] + H(+). Accepts electrons from ETF and reduces ubiquinone. This Paracoccus denitrificans protein is Electron transfer flavoprotein-ubiquinone oxidoreductase.